The following is a 220-amino-acid chain: Deoxyribose-phosphate aldolase (220 aa).

Asp-89 (proton donor/acceptor) is an active-site residue. Catalysis depends on Lys-151, which acts as the Schiff-base intermediate with acetaldehyde. The active-site Proton donor/acceptor is Lys-180.

This sequence belongs to the DeoC/FbaB aldolase family. DeoC type 1 subfamily.

It localises to the cytoplasm. It catalyses the reaction 2-deoxy-D-ribose 5-phosphate = D-glyceraldehyde 3-phosphate + acetaldehyde. It functions in the pathway carbohydrate degradation; 2-deoxy-D-ribose 1-phosphate degradation; D-glyceraldehyde 3-phosphate and acetaldehyde from 2-deoxy-alpha-D-ribose 1-phosphate: step 2/2. In terms of biological role, catalyzes a reversible aldol reaction between acetaldehyde and D-glyceraldehyde 3-phosphate to generate 2-deoxy-D-ribose 5-phosphate. This is Deoxyribose-phosphate aldolase from Streptococcus mutans serotype c (strain ATCC 700610 / UA159).